We begin with the raw amino-acid sequence, 305 residues long: Acetaldehyde dehydrogenase (305 aa).

An NAD(+)-binding site is contributed by 12–15; the sequence is SGNI. Cys127 acts as the Acyl-thioester intermediate in catalysis. NAD(+)-binding positions include 158-166 and Asn277; that span reads SAGPGTRAN.

Belongs to the acetaldehyde dehydrogenase family.

It carries out the reaction acetaldehyde + NAD(+) + CoA = acetyl-CoA + NADH + H(+). This Mycolicibacterium paratuberculosis (strain ATCC BAA-968 / K-10) (Mycobacterium paratuberculosis) protein is Acetaldehyde dehydrogenase.